We begin with the raw amino-acid sequence, 656 residues long: F-box/LRR-repeat protein 10 (656 aa).

The F-box domain occupies 20-66 (ERSLDLLPAALLETIMTKLDVASLCSLASTCKTLKSCVTRVLTFTPN). LRR repeat units lie at residues 71–96 (NVSL…KLDC), 120–145 (CRDF…CLGS), 151–176 (GRSI…ALMF), 194–221 (SDRL…EISG), 243–268 (VDCI…DIRD), 277–301 (VSDL…SLIR), 310–335 (FRRV…CLGG), 336–361 (FCRV…SIYH), 362–387 (GPKL…SLRR), 388–412 (CHLL…DLRG), 413–437 (CRNL…LLDG), 439–463 (DISD…SVRG), 464–491 (CRNL…DLSN), 492–517 (LPNL…QLRE), 518–551 (CRLI…DLYD), and 552–578 (CGGI…GITG). The segment at 632-656 (ILGDEGDVEMEDAEDESEEDASEED) is disordered.

In Arabidopsis thaliana (Mouse-ear cress), this protein is F-box/LRR-repeat protein 10 (FBL10).